The sequence spans 367 residues: MSTEVNANQSPNAESRQEAARSGERDKALNLVLGQIERNFGKGSIMRLGDASRMRVETISTGALTLDLALGGGYPKGRVVEVYGPESSGKTTLTLHAIAEVQRRGGVAAFVDAEHALDPVYAASLGVDVENLLVSQPDTGEMALEIVDQLIRSAAVELVVVDSVAALTPRAEIEGEMGDHVIGSQARLMSQAMRKITGNIGKSGCTVIFLNQLRLKIGVTYGNPETTTGGNALKFYASVRLDIRRIQTLKRGTDEYGIRAKVKVAKNKVAPPFRIAEFDILFGKGISTIGCLLDLAEETNIVARKGAWYSYEGDNIGQGRDNTITWLEQNTEAKEKIEKLVRQKLTEGSEVSSNSMRPLTTANRKAA.

A compositionally biased stretch (polar residues) spans 1–14; it reads MSTEVNANQSPNAE. A disordered region spans residues 1 to 24; sequence MSTEVNANQSPNAESRQEAARSGE. Residues 15-24 show a composition bias toward basic and acidic residues; sequence SRQEAARSGE. ATP is bound at residue 84-91; that stretch reads GPESSGKT. The disordered stretch occupies residues 348 to 367; the sequence is GSEVSSNSMRPLTTANRKAA. Positions 349 to 367 are enriched in polar residues; the sequence is SEVSSNSMRPLTTANRKAA.

It belongs to the RecA family.

The protein localises to the cytoplasm. Functionally, can catalyze the hydrolysis of ATP in the presence of single-stranded DNA, the ATP-dependent uptake of single-stranded DNA by duplex DNA, and the ATP-dependent hybridization of homologous single-stranded DNAs. It interacts with LexA causing its activation and leading to its autocatalytic cleavage. The chain is Protein RecA from Prochlorococcus marinus (strain MIT 9211).